A 397-amino-acid chain; its full sequence is Elongation factor Tu (397 aa).

Positions 10 to 207 (KPHVNIGTIG…AVDESIPDPV (198 aa)) constitute a tr-type G domain. The G1 stretch occupies residues 19 to 26 (GHVDHGKT). 19-26 (GHVDHGKT) is a binding site for GTP. T26 contributes to the Mg(2+) binding site. Residues 63–67 (GITIN) are G2. The segment at 84 to 87 (DAPG) is G3. Residues 84-88 (DAPGH) and 139-142 (NKAD) each bind GTP. The segment at 139-142 (NKAD) is G4. The G5 stretch occupies residues 177-179 (SGL).

This sequence belongs to the TRAFAC class translation factor GTPase superfamily. Classic translation factor GTPase family. EF-Tu/EF-1A subfamily. In terms of assembly, monomer.

The protein localises to the cytoplasm. It catalyses the reaction GTP + H2O = GDP + phosphate + H(+). Functionally, GTP hydrolase that promotes the GTP-dependent binding of aminoacyl-tRNA to the A-site of ribosomes during protein biosynthesis. The chain is Elongation factor Tu from Tropheryma whipplei (strain Twist) (Whipple's bacillus).